The sequence spans 391 residues: 8-amino-7-oxononanoate synthase (391 aa).

A substrate-binding site is contributed by Arg-19. Pyridoxal 5'-phosphate is bound at residue 106-107 (GY). Position 131 (His-131) interacts with substrate. Residues Ser-178, His-206, and Thr-234 each coordinate pyridoxal 5'-phosphate. Lys-237 carries the post-translational modification N6-(pyridoxal phosphate)lysine. Residue Thr-353 coordinates substrate.

This sequence belongs to the class-II pyridoxal-phosphate-dependent aminotransferase family. BioF subfamily. As to quaternary structure, homodimer. Requires pyridoxal 5'-phosphate as cofactor.

It carries out the reaction 6-carboxyhexanoyl-[ACP] + L-alanine + H(+) = (8S)-8-amino-7-oxononanoate + holo-[ACP] + CO2. Its pathway is cofactor biosynthesis; biotin biosynthesis. Its function is as follows. Catalyzes the decarboxylative condensation of pimeloyl-[acyl-carrier protein] and L-alanine to produce 8-amino-7-oxononanoate (AON), [acyl-carrier protein], and carbon dioxide. This is 8-amino-7-oxononanoate synthase from Pelobacter propionicus (strain DSM 2379 / NBRC 103807 / OttBd1).